A 154-amino-acid chain; its full sequence is Xanthine-guanine phosphoribosyltransferase (154 aa).

5-phospho-alpha-D-ribose 1-diphosphate is bound by residues 37-38 (RG), Arg69, and 88-96 (EDLVDSGDT). GMP is bound at residue Arg69. Asp89 provides a ligand contact to Mg(2+). Residues Asp92 and Ile135 each contribute to the guanine site. Xanthine contacts are provided by Asp92 and Ile135. GMP is bound by residues 92–96 (DSGDT) and 134–135 (WI).

The protein belongs to the purine/pyrimidine phosphoribosyltransferase family. XGPT subfamily. Homotetramer. Mg(2+) is required as a cofactor.

The protein localises to the cell inner membrane. It carries out the reaction GMP + diphosphate = guanine + 5-phospho-alpha-D-ribose 1-diphosphate. The enzyme catalyses XMP + diphosphate = xanthine + 5-phospho-alpha-D-ribose 1-diphosphate. The catalysed reaction is IMP + diphosphate = hypoxanthine + 5-phospho-alpha-D-ribose 1-diphosphate. It participates in purine metabolism; GMP biosynthesis via salvage pathway; GMP from guanine: step 1/1. It functions in the pathway purine metabolism; XMP biosynthesis via salvage pathway; XMP from xanthine: step 1/1. Its function is as follows. Purine salvage pathway enzyme that catalyzes the transfer of the ribosyl-5-phosphate group from 5-phospho-alpha-D-ribose 1-diphosphate (PRPP) to the N9 position of the 6-oxopurines guanine and xanthine to form the corresponding ribonucleotides GMP (guanosine 5'-monophosphate) and XMP (xanthosine 5'-monophosphate), with the release of PPi. To a lesser extent, also acts on hypoxanthine. This is Xanthine-guanine phosphoribosyltransferase from Vibrio parahaemolyticus serotype O3:K6 (strain RIMD 2210633).